Here is a 1423-residue protein sequence, read N- to C-terminus: Autophagy-related protein 11 (1423 aa).

Coiled-coil stretches lie at residues 551 to 589 (DDEL…QSQA) and 625 to 978 (SEGT…ASEL). 2 disordered regions span residues 583–660 (LHRQ…SNRA) and 1028–1048 (RAER…SLRK). A compositionally biased stretch (polar residues) spans 585 to 602 (RQSQASRPGNLFQPQTNS). Basic and acidic residues predominate over residues 631–648 (LLRRISELENELREEKQR). 2 stretches are compositionally biased toward polar residues: residues 650–660 (SRIQNDLSNRA) and 1034–1047 (QNPN…TSLR). A coiled-coil region spans residues 1102–1130 (HRIKEVEHKARKWQKEARSYRDRAHIAQK). A disordered region spans residues 1327–1423 (SLRAAAPETP…DYTYESPGKK (97 aa)). Residues 1383-1395 (KTAEPRRMLDRQE) are compositionally biased toward basic and acidic residues.

The protein belongs to the ATG11 family. Homodimer and potential homooligomers. Interacts with ATG1 kinase and the ATG19 and ATG34 cargo protein transporters. Interacts with ATG9, ATG17 and ATG20.

Its subcellular location is the preautophagosomal structure membrane. The protein localises to the vacuole membrane. Its function is as follows. Involved in cytoplasm to vacuole transport (Cvt), pexophagy, mitophagy and nucleophagy. Recruits mitochondria for their selective degradation via autophagy (mitophagy) during starvation, through its interaction with ATG32. Works as scaffold proteins that recruit ATG proteins to the pre-autophagosome (PAS), the site of vesicle/autophagosome formation. Required for ATG9 anterograde transport from the mitochondria to the PAS. Also recruits the ATG19-prAPE1 complex to the PAS. Required for the Cvt vesicles completion. Plays a role in morphological differentiation and cephalosporin production. This is Autophagy-related protein 11 from Hapsidospora chrysogena (Acremonium chrysogenum).